Here is a 600-residue protein sequence, read N- to C-terminus: DDB1- and CUL4-associated factor 15 (600 aa).

A disordered region spans residues 1-29 (MAPSSKSERNSGAGSAGGGPGGTGGKRAV). Residues 14–27 (GSAGGGPGGTGGKR) show a composition bias toward gly residues. The residue at position 50 (serine 50) is a Phosphoserine. Residues cysteine 193, cysteine 196, cysteine 211, and histidine 214 each contribute to the Zn(2+) site. Residue serine 314 is modified to Phosphoserine. Over residues 334-343 (AKGSPLEETR) the composition is skewed to basic and acidic residues. Residues 334–384 (AKGSPLEETRLPSSLGPSSSRCRPSLEPQAPSGEVVPRDSPPAAETTAPEP) form a disordered region. Composition is skewed to low complexity over residues 344–359 (LPSS…RPSL) and 374–384 (PPAAETTAPEP).

Component of the DCX(DCAF15) complex, also named CLR4(DCAF15) complex, composed of DCAF15, DDB1, cullin-4 (CUL4A or CUL4B), DDA1 and RBX1.

Its pathway is protein modification; protein ubiquitination. Substrate-recognition component of the DCX(DCAF15) complex, a cullin-4-RING E3 ubiquitin-protein ligase complex that mediates ubiquitination and degradation of target proteins. The DCX(DCAF15) complex acts as a regulator of the natural killer (NK) cells effector functions, possibly by mediating ubiquitination and degradation of cohesin subunits SMC1A and SMC3. May play a role in the activation of antigen-presenting cells (APC) and their interaction with NK cells. This Mus musculus (Mouse) protein is DDB1- and CUL4-associated factor 15.